Here is a 463-residue protein sequence, read N- to C-terminus: Soluble pyridine nucleotide transhydrogenase (463 aa).

35-44 contacts FAD; that stretch reads EKQQAVGGNC.

This sequence belongs to the class-I pyridine nucleotide-disulfide oxidoreductase family. Requires FAD as cofactor.

Its subcellular location is the cytoplasm. It carries out the reaction NAD(+) + NADPH = NADH + NADP(+). Functionally, conversion of NADPH, generated by peripheral catabolic pathways, to NADH, which can enter the respiratory chain for energy generation. This is Soluble pyridine nucleotide transhydrogenase from Chromohalobacter salexigens (strain ATCC BAA-138 / DSM 3043 / CIP 106854 / NCIMB 13768 / 1H11).